We begin with the raw amino-acid sequence, 105 residues long: Large ribosomal subunit protein uL24 (105 aa).

The protein belongs to the universal ribosomal protein uL24 family. As to quaternary structure, part of the 50S ribosomal subunit.

In terms of biological role, one of two assembly initiator proteins, it binds directly to the 5'-end of the 23S rRNA, where it nucleates assembly of the 50S subunit. Functionally, one of the proteins that surrounds the polypeptide exit tunnel on the outside of the subunit. The chain is Large ribosomal subunit protein uL24 from Beijerinckia indica subsp. indica (strain ATCC 9039 / DSM 1715 / NCIMB 8712).